Here is a 274-residue protein sequence, read N- to C-terminus: Large ribosomal subunit protein uL2 (274 aa).

The segment at 223–274 (VVMNPVDHPHGGGEGRTSGGRHPVSPWGVPTKGYKTRSNKRTDKYIVRRRNK) is disordered.

This sequence belongs to the universal ribosomal protein uL2 family. Part of the 50S ribosomal subunit. Forms a bridge to the 30S subunit in the 70S ribosome.

Its function is as follows. One of the primary rRNA binding proteins. Required for association of the 30S and 50S subunits to form the 70S ribosome, for tRNA binding and peptide bond formation. It has been suggested to have peptidyltransferase activity; this is somewhat controversial. Makes several contacts with the 16S rRNA in the 70S ribosome. This Vibrio cholerae serotype O1 (strain M66-2) protein is Large ribosomal subunit protein uL2.